The chain runs to 205 residues: Outer-membrane lipoprotein carrier protein (205 aa).

An N-terminal signal peptide occupies residues 1 to 22 (MKKTTLKFAALTLLGLSNLALA).

This sequence belongs to the LolA family. Monomer.

It localises to the periplasm. In terms of biological role, participates in the translocation of lipoproteins from the inner membrane to the outer membrane. Only forms a complex with a lipoprotein if the residue after the N-terminal Cys is not an aspartate (The Asp acts as a targeting signal to indicate that the lipoprotein should stay in the inner membrane). The polypeptide is Outer-membrane lipoprotein carrier protein (Haemophilus influenzae (strain PittEE)).